The sequence spans 516 residues: Probable metalloreductase AIM14 (516 aa).

7 helical membrane-spanning segments follow: residues Ile18–Leu38, Leu64–Ile84, Leu97–Ser117, His128–Ile148, Leu168–Ile188, Ser195–Ala215, and Pro217–Ala237. The 114-residue stretch at Leu94–Ile207 folds into the Ferric oxidoreductase domain. The region spanning Arg238–Pro363 is the FAD-binding FR-type domain.

It belongs to the ferric reductase (FRE) family. AIM14 subfamily.

It localises to the membrane. Functionally, probable cell surface metalloreductase. May be involved in iron or copper homeostasis. This is Probable metalloreductase AIM14 (AIM14) from Eremothecium gossypii (strain ATCC 10895 / CBS 109.51 / FGSC 9923 / NRRL Y-1056) (Yeast).